Here is a 200-residue protein sequence, read N- to C-terminus: Inducible T-cell costimulator (200 aa).

Residues 1–20 form the signal peptide; that stretch reads MKPYFSCVFVFCFLIKLLTG. Topologically, residues 21 to 145 are extracellular; the sequence is ELNDLANHRM…LCCQLKLWLP (125 aa). Residues 30–133 form the Ig-like V-type domain; sequence MFSFHDGGVQ…LSGGYLLIYE (104 aa). 2 disulfide bridges follow: cysteine 42–cysteine 109 and cysteine 63–cysteine 83. N-linked (GlcNAc...) asparagine glycans are attached at residues asparagine 89 and asparagine 123. Residues 146–166 form a helical membrane-spanning segment; sequence VGCAAFVAALLFGCIFIVWFA. At 167–200 the chain is on the cytoplasmic side; the sequence is KKKYRSSVHDPNSEYMFMAAVNTNKKSRLAGMTS.

Homodimer; disulfide-linked. Interacts with ICOSLG. Interacts with PIK3R1. Interacts with TBK1; this interaction is critical for the maturation of T follicular regulatory cells. In terms of processing, N-glycosylated. Strongly expressed in the spleen and lung. Lower expression seen in liver, kidney and testis.

The protein resides in the cell membrane. Stimulatory receptor expressed in activated or antigen-experienced T-cells that plays an important role in the immune response. Upon binding to its ligand ICOSL expressed on antigen presenting cells (APCs), delivers costimulatory signals that enhances all basic T-cell responses to a foreign antigen, namely proliferation, secretion of lymphokines including IL10, up-regulation of molecules that mediate cell-cell interaction, and effective help for antibody secretion by B-cells. Also acts as a costimulatory receptor critical for the differentiation of T follicular regulatory cells upon immune challenges such as viral infection. Mechanistically, potentiates TCR-induced calcium flux by augmenting PLCG1 activation and actin remodeling. In addition, activates PI3K signaling pathways independently of calcium flux. Essential both for efficient interaction between T and B-cells and for normal antibody responses to T-cell dependent antigens. Prevents the apoptosis of pre-activated T-cells. Plays a critical role in CD40-mediated class switching of immunoglobin isotypes. The polypeptide is Inducible T-cell costimulator (Icos) (Rattus norvegicus (Rat)).